Here is a 460-residue protein sequence, read N- to C-terminus: Putative movement protein (460 aa).

Disordered regions lie at residues 267–314 (SGSK…SDFE) and 349–460 (RQNQ…PSGL). Basic residues predominate over residues 368-379 (RKSKGISGRRKQ).

This sequence belongs to the tobamoviruses movement protein family.

Its function is as follows. Suppressor of viral-induced RNA silencing. In Crataegus (hawthorn), this protein is Putative movement protein.